The following is a 160-amino-acid chain: Inorganic pyrophosphatase (160 aa).

K16, R28, and Y40 together coordinate substrate. Residues D50, D55, and D87 each contribute to the Mg(2+) site. Residue Y126 coordinates substrate.

It belongs to the PPase family. As to quaternary structure, homohexamer. It depends on Mg(2+) as a cofactor.

It is found in the cytoplasm. It carries out the reaction diphosphate + H2O = 2 phosphate + H(+). Catalyzes the hydrolysis of inorganic pyrophosphate (PPi) forming two phosphate ions. This is Inorganic pyrophosphatase from Nanoarchaeum equitans (strain Kin4-M).